The chain runs to 169 residues: Regulator of sigma D (169 aa).

Belongs to the Rsd/AlgQ family. As to quaternary structure, interacts with RpoD.

The protein resides in the cytoplasm. Its function is as follows. Binds RpoD and negatively regulates RpoD-mediated transcription activation by preventing the interaction between the primary sigma factor RpoD with the catalytic core of the RNA polymerase and with promoter DNA. May be involved in replacement of the RNA polymerase sigma subunit from RpoD to RpoS during the transition from exponential growth to the stationary phase. The protein is Regulator of sigma D of Yersinia pseudotuberculosis serotype O:1b (strain IP 31758).